The primary structure comprises 116 residues: Non-specific lipid-transfer protein (116 aa).

A signal peptide spans 1-25 (MASMVMNVLCVAVACMVFSASYADA). 4 disulfide bridges follow: C28–C75, C38–C52, C53–C98, and C73–C112.

It belongs to the plant LTP family.

Its function is as follows. Plant non-specific lipid-transfer proteins transfer phospholipids as well as galactolipids across membranes. May play a role in wax or cutin deposition in the cell walls of expanding epidermal cells and certain secretory tissues. The chain is Non-specific lipid-transfer protein from Gerbera hybrida (Daisy).